Reading from the N-terminus, the 148-residue chain is Methylglyoxal synthase (148 aa).

In terms of domain architecture, MGS-like spans 4-148 (VSVPAIKRIV…LSYNTKVKKD (145 aa)). Residues histidine 17, lysine 21, 43–46 (TGTT), and 63–64 (SG) each bind substrate. The active-site Proton donor/acceptor is the aspartate 69. Position 96 (histidine 96) interacts with substrate.

Belongs to the methylglyoxal synthase family.

It catalyses the reaction dihydroxyacetone phosphate = methylglyoxal + phosphate. Its function is as follows. Catalyzes the formation of methylglyoxal from dihydroxyacetone phosphate. This Leptospira interrogans serogroup Icterohaemorrhagiae serovar copenhageni (strain Fiocruz L1-130) protein is Methylglyoxal synthase.